Consider the following 458-residue polypeptide: UDP-N-acetylmuramoylalanine--D-glutamate ligase (458 aa).

Position 124–130 (124–130) interacts with ATP; that stretch reads GSDGKTT.

The protein belongs to the MurCDEF family.

It is found in the cytoplasm. The enzyme catalyses UDP-N-acetyl-alpha-D-muramoyl-L-alanine + D-glutamate + ATP = UDP-N-acetyl-alpha-D-muramoyl-L-alanyl-D-glutamate + ADP + phosphate + H(+). It participates in cell wall biogenesis; peptidoglycan biosynthesis. Its function is as follows. Cell wall formation. Catalyzes the addition of glutamate to the nucleotide precursor UDP-N-acetylmuramoyl-L-alanine (UMA). The sequence is that of UDP-N-acetylmuramoylalanine--D-glutamate ligase from Clostridium beijerinckii (strain ATCC 51743 / NCIMB 8052) (Clostridium acetobutylicum).